Consider the following 390-residue polypeptide: F-box/kelch-repeat protein At3g04660 (390 aa).

The F-box domain occupies 18–67; it reads YDPSSILPLELKIEILMKSPPKSIAKLGFVSNHWSSIIRGQVFTDLYMRR. 2 Kelch repeats span residues 115–161 and 272–323; these read FSPP…FGYD and MVDH…DQRV.

In terms of assembly, part of a SCF (ASK-cullin-F-box) protein ligase complex. Interacts with SKP1A/ASK1, SKP1B/ASK2, ASK11 and ASK13.

It localises to the nucleus. Its pathway is protein modification; protein ubiquitination. Its function is as follows. Component of SCF(ASK-cullin-F-box) E3 ubiquitin ligase complexes, which may mediate the ubiquitination and subsequent proteasomal degradation of target proteins. In Arabidopsis thaliana (Mouse-ear cress), this protein is F-box/kelch-repeat protein At3g04660.